The primary structure comprises 846 residues: Choline trimethylamine-lyase (846 aa).

A PFL domain is found at 60–718 (PRHVKLKENF…LLGASANGRR (659 aa)). Residue cysteine 489 is the Cysteine radical intermediate of the active site. The active-site Proton acceptor is the glutamate 491. One can recognise a Glycine radical domain in the interval 725–846 (DGISPTQGAD…IISRTMLHGF (122 aa)). At glycine 821 the chain carries Glycine radical.

Belongs to the glycyl radical enzyme (GRE) family. CutC subfamily. Homodimer. Requires the activating protein CutD to generate the key active site glycyl radical on Gly-821 that is involved in catalysis.

The catalysed reaction is choline = trimethylamine + acetaldehyde. The protein operates within amine and polyamine metabolism; choline degradation. Functionally, glycine radical enzyme that catalyzes the cleavage of a C-N bond in choline, producing trimethylamine (TMA) and acetaldehyde. Is involved in the anaerobic choline utilization pathway that allows D.alaskensis to grow on choline as a source of carbon and energy. Is strictly specific for choline as substrate. The protein is Choline trimethylamine-lyase of Oleidesulfovibrio alaskensis (strain ATCC BAA-1058 / DSM 17464 / G20) (Desulfovibrio alaskensis).